Reading from the N-terminus, the 501-residue chain is Dihydrolipoyl dehydrogenase, mitochondrial (501 aa).

Residues methionine 1–phenylalanine 31 constitute a mitochondrion transit peptide. Residues glutamate 67–cysteine 76, lysine 85, glycine 149, and threonine 178–serine 180 contribute to the FAD site. The cysteines at positions 76 and 81 are disulfide-linked. NAD(+) is bound by residues glycine 215 to glutamate 222, glutamate 238, valine 272, and glycine 307. FAD contacts are provided by residues aspartate 348 and methionine 354 to histidine 357. The Proton acceptor role is filled by histidine 480.

Belongs to the class-I pyridine nucleotide-disulfide oxidoreductase family. In terms of assembly, homodimer. The cofactor is FAD.

Its subcellular location is the mitochondrion matrix. It catalyses the reaction N(6)-[(R)-dihydrolipoyl]-L-lysyl-[protein] + NAD(+) = N(6)-[(R)-lipoyl]-L-lysyl-[protein] + NADH + H(+). Its function is as follows. Lipoamide dehydrogenase is a component of the glycine cleavage system as well as of the alpha-ketoacid dehydrogenase complexes. The pyruvate dehydrogenase complex contains multiple copies of three enzymatic components: pyruvate dehydrogenase (E1), dihydrolipoamide acetyltransferase (E2) and lipoamide dehydrogenase (E3). The sequence is that of Dihydrolipoyl dehydrogenase, mitochondrial (LPD) from Pisum sativum (Garden pea).